The chain runs to 220 residues: Glutathione S-transferase 2 (220 aa).

The region spanning 2-88 (VVTLGYWDIR…YIARKHNMCG (87 aa)) is the GST N-terminal domain. Residues 7–8 (YW), 43–46 (PSDW), Lys50, 59–60 (NL), and 72–73 (QS) contribute to the glutathione site. The GST C-terminal domain occupies 90–208 (TEVEKQRVDV…RSGRFMKAPI (119 aa)). Tyr116 lines the substrate pocket.

This sequence belongs to the GST superfamily. Mu family. In terms of assembly, homodimer.

The protein localises to the cytoplasm. The enzyme catalyses RX + glutathione = an S-substituted glutathione + a halide anion + H(+). Conjugation of reduced glutathione to a wide number of exogenous and endogenous hydrophobic electrophiles. Participates in the formation of novel hepoxilin regioisomers. The chain is Glutathione S-transferase 2 (GSTM2) from Gallus gallus (Chicken).